A 252-amino-acid chain; its full sequence is Chitooligosaccharide deacetylase (252 aa).

Mg(2+) contacts are provided by His-61 and His-125.

This sequence belongs to the YdjC deacetylase family. ChbG subfamily. Homodimer. The cofactor is Mg(2+).

It localises to the cytoplasm. The catalysed reaction is N,N'-diacetylchitobiose + H2O = N-acetyl-beta-D-glucosaminyl-(1-&gt;4)-D-glucosamine + acetate. The enzyme catalyses diacetylchitobiose-6'-phosphate + H2O = N'-monoacetylchitobiose-6'-phosphate + acetate. The protein operates within glycan degradation; chitin degradation. Its function is as follows. Involved in the degradation of chitin. ChbG is essential for growth on the acetylated chitooligosaccharides chitobiose and chitotriose but is dispensable for growth on cellobiose and chitosan dimer, the deacetylated form of chitobiose. Deacetylation of chitobiose-6-P and chitotriose-6-P is necessary for both the activation of the chb promoter by the regulatory protein ChbR and the hydrolysis of phosphorylated beta-glucosides by the phospho-beta-glucosidase ChbF. Catalyzes the removal of only one acetyl group from chitobiose-6-P to yield monoacetylchitobiose-6-P, the inducer of ChbR and the substrate of ChbF. The protein is Chitooligosaccharide deacetylase of Escherichia fergusonii (strain ATCC 35469 / DSM 13698 / CCUG 18766 / IAM 14443 / JCM 21226 / LMG 7866 / NBRC 102419 / NCTC 12128 / CDC 0568-73).